A 334-amino-acid chain; its full sequence is Cytoplasmic envelopment protein 2 (334 aa).

Belongs to the herpesviridae cytoplasmic envelopment protein 2 family. As to quaternary structure, interacts with cytoplasmic envelopment protein 3 and with the capsid.

It is found in the virion tegument. Its subcellular location is the host cytoplasm. It localises to the host nucleus. In terms of biological role, plays a critical role in cytoplasmic virus egress. Participates in the final step of tegumentation and envelope acquisition within the host cytoplasm by directly interacting with the capsid. Upon virion binding to target cell, a signaling cascade is triggered to disrupt the interaction with the capsid, thereby preparing capsid uncoating. This is Cytoplasmic envelopment protein 2 (ORF33) from Homo sapiens (Human).